We begin with the raw amino-acid sequence, 354 residues long: Probable L-ascorbate-6-phosphate lactonase UlaG (354 aa).

This sequence belongs to the UlaG family. A divalent metal cation serves as cofactor.

It localises to the cytoplasm. The enzyme catalyses L-ascorbate 6-phosphate + H2O = 3-dehydro-L-gulonate 6-phosphate. Its pathway is cofactor degradation; L-ascorbate degradation; D-xylulose 5-phosphate from L-ascorbate: step 1/4. Its function is as follows. Probably catalyzes the hydrolysis of L-ascorbate-6-P into 3-keto-L-gulonate-6-P. Is essential for L-ascorbate utilization under anaerobic conditions. This is Probable L-ascorbate-6-phosphate lactonase UlaG from Shigella boydii serotype 18 (strain CDC 3083-94 / BS512).